The following is a 215-amino-acid chain: Urease accessory protein UreG (215 aa).

GTP is bound at residue 24-31 (GPVGSGKT).

It belongs to the SIMIBI class G3E GTPase family. UreG subfamily. As to quaternary structure, homodimer. UreD, UreF and UreG form a complex that acts as a GTP-hydrolysis-dependent molecular chaperone, activating the urease apoprotein by helping to assemble the nickel containing metallocenter of UreC. The UreE protein probably delivers the nickel.

It is found in the cytoplasm. Facilitates the functional incorporation of the urease nickel metallocenter. This process requires GTP hydrolysis, probably effectuated by UreG. The polypeptide is Urease accessory protein UreG (Burkholderia ambifaria (strain ATCC BAA-244 / DSM 16087 / CCUG 44356 / LMG 19182 / AMMD) (Burkholderia cepacia (strain AMMD))).